The primary structure comprises 101 residues: Small ribosomal subunit protein uS14A (101 aa).

Residues 29–73 are disordered; sequence AIISSPSTPADARAAAQSELNRQPRDASPVRVRNRDAVDGRPRGH. Residues 61–70 are compositionally biased toward basic and acidic residues; the sequence is RNRDAVDGRP.

Belongs to the universal ribosomal protein uS14 family. As to quaternary structure, part of the 30S ribosomal subunit. Contacts proteins S3 and S10.

Its function is as follows. Binds 16S rRNA, required for the assembly of 30S particles and may also be responsible for determining the conformation of the 16S rRNA at the A site. The protein is Small ribosomal subunit protein uS14A of Mycolicibacterium gilvum (strain PYR-GCK) (Mycobacterium gilvum (strain PYR-GCK)).